The following is a 340-amino-acid chain: Holliday junction branch migration complex subunit RuvB (340 aa).

Residues 1–184 form a large ATPase domain (RuvB-L) region; that stretch reads MNENLDPTTK…FGISSRLQYY (184 aa). ATP-binding positions include Leu23, Arg24, Gly65, Lys68, Thr69, Thr70, 131–133, Arg174, Tyr184, and Arg221; that span reads EDF. Position 69 (Thr69) interacts with Mg(2+). The small ATPAse domain (RuvB-S) stretch occupies residues 185–255; sequence STELLTTIVE…ISKYALKALN (71 aa). Positions 258 to 340 are head domain (RuvB-H); sequence AHGLDEMDNK…INTNIQGGLF (83 aa). DNA contacts are provided by Arg313 and Arg318.

The protein belongs to the RuvB family. Homohexamer. Forms an RuvA(8)-RuvB(12)-Holliday junction (HJ) complex. HJ DNA is sandwiched between 2 RuvA tetramers; dsDNA enters through RuvA and exits via RuvB. An RuvB hexamer assembles on each DNA strand where it exits the tetramer. Each RuvB hexamer is contacted by two RuvA subunits (via domain III) on 2 adjacent RuvB subunits; this complex drives branch migration. In the full resolvosome a probable DNA-RuvA(4)-RuvB(12)-RuvC(2) complex forms which resolves the HJ.

It localises to the cytoplasm. It carries out the reaction ATP + H2O = ADP + phosphate + H(+). Functionally, the RuvA-RuvB-RuvC complex processes Holliday junction (HJ) DNA during genetic recombination and DNA repair, while the RuvA-RuvB complex plays an important role in the rescue of blocked DNA replication forks via replication fork reversal (RFR). RuvA specifically binds to HJ cruciform DNA, conferring on it an open structure. The RuvB hexamer acts as an ATP-dependent pump, pulling dsDNA into and through the RuvAB complex. RuvB forms 2 homohexamers on either side of HJ DNA bound by 1 or 2 RuvA tetramers; 4 subunits per hexamer contact DNA at a time. Coordinated motions by a converter formed by DNA-disengaged RuvB subunits stimulates ATP hydrolysis and nucleotide exchange. Immobilization of the converter enables RuvB to convert the ATP-contained energy into a lever motion, pulling 2 nucleotides of DNA out of the RuvA tetramer per ATP hydrolyzed, thus driving DNA branch migration. The RuvB motors rotate together with the DNA substrate, which together with the progressing nucleotide cycle form the mechanistic basis for DNA recombination by continuous HJ branch migration. Branch migration allows RuvC to scan DNA until it finds its consensus sequence, where it cleaves and resolves cruciform DNA. This is Holliday junction branch migration complex subunit RuvB from Flavobacterium johnsoniae (strain ATCC 17061 / DSM 2064 / JCM 8514 / BCRC 14874 / CCUG 350202 / NBRC 14942 / NCIMB 11054 / UW101) (Cytophaga johnsonae).